The sequence spans 352 residues: Neutral protease 2 (352 aa).

The N-terminal stretch at 1 to 19 (MRVTTLSTALFALASTAVS) is a signal peptide. The propeptide occupies 20–175 (APTAGSSSPG…TKALSQLTRR (156 aa)). Intrachain disulfides connect Cys-181–Cys-253, Cys-260–Cys-278, and Cys-292–Cys-352. Residue His-303 participates in Zn(2+) binding. Residue Glu-304 is part of the active site. Positions 307 and 318 each coordinate Zn(2+).

It belongs to the peptidase M35 family. The cofactor is Zn(2+).

It carries out the reaction Preferential cleavage of bonds with hydrophobic residues in P1'. Also 3-Asn-|-Gln-4 and 8-Gly-|-Ser-9 bonds in insulin B chain.. Functionally, metalloprotease that shows high activities on basic nuclear substrates such as histone and protamine. This is Neutral protease 2 from Aspergillus oryzae (strain ATCC 42149 / RIB 40) (Yellow koji mold).